A 132-amino-acid chain; its full sequence is Interleukin-4 (132 aa).

Positions 1 to 24 (MGLTSQLIPTLVCLLALTSTFVHG) are cleaved as a signal peptide. Residues asparagine 28, asparagine 45, asparagine 62, and asparagine 101 are each glycosylated (N-linked (GlcNAc...) asparagine). Intrachain disulfides connect cysteine 48-cysteine 84 and cysteine 70-cysteine 104.

The protein belongs to the IL-4/IL-13 family.

It localises to the secreted. Its function is as follows. Participates in at least several B-cell activation processes as well as of other cell types. It is a costimulator of DNA-synthesis. It induces the expression of class II MHC molecules on resting B-cells. It enhances both secretion and cell surface expression of IgE and IgG1. It also regulates the expression of the low affinity Fc receptor for IgE (CD23) on both lymphocytes and monocytes. Positively regulates IL31RA expression in macrophages. Stimulates autophagy in dendritic cells by interfering with mTORC1 signaling and through the induction of RUFY4. This Ailuropoda melanoleuca (Giant panda) protein is Interleukin-4 (IL4).